A 37-amino-acid polypeptide reads, in one-letter code: Unknown protein 25 (37 aa).

The chain is Unknown protein 25 from Pseudotsuga menziesii (Douglas-fir).